A 300-amino-acid polypeptide reads, in one-letter code: N-acetylmuramic acid 6-phosphate etherase (300 aa).

In terms of domain architecture, SIS spans 57-220 (IAVAFQSGGR…TTGAMIRTGK (164 aa)). The Proton donor role is filled by E85. E116 is an active-site residue.

The protein belongs to the GCKR-like family. MurNAc-6-P etherase subfamily. As to quaternary structure, homodimer.

It catalyses the reaction N-acetyl-D-muramate 6-phosphate + H2O = N-acetyl-D-glucosamine 6-phosphate + (R)-lactate. It participates in amino-sugar metabolism; 1,6-anhydro-N-acetylmuramate degradation. Its pathway is amino-sugar metabolism; N-acetylmuramate degradation. The protein operates within cell wall biogenesis; peptidoglycan recycling. Its function is as follows. Specifically catalyzes the cleavage of the D-lactyl ether substituent of MurNAc 6-phosphate, producing GlcNAc 6-phosphate and D-lactate. Together with AnmK, is also required for the utilization of anhydro-N-acetylmuramic acid (anhMurNAc) either imported from the medium or derived from its own cell wall murein, and thus plays a role in cell wall recycling. In Aliivibrio fischeri (strain MJ11) (Vibrio fischeri), this protein is N-acetylmuramic acid 6-phosphate etherase.